Consider the following 405-residue polypeptide: Angiopoietin-related protein 4 (405 aa).

The first 23 residues, 1–23 (MRCAPTAGAALVLCAATAGLLSA), serve as a signal peptide directing secretion. Positions 54 to 146 (GLREHVERTR…QNLQSQIDLL (93 aa)) form a coiled coil. A glycan (N-linked (GlcNAc...) asparagine) is linked at N176. A Fibrinogen C-terminal domain is found at 178-400 (TRLHRPPRDC…ATTLLIQPME (223 aa)). A disulfide bridge connects residues C187 and C215. 2 N-linked (GlcNAc...) asparagine glycosylation sites follow: N231 and N237. A disulfide bridge connects residues C340 and C353.

In terms of assembly, homooligomer; disulfide-linked via Cys residues in the N-terminal part of the protein. The homooligomer undergoes proteolytic processing to release its carboxyl fibrinogen-like domain, which circulates as a monomer. The homooligomer unprocessed form is able to interact with the extracellular matrix. Post-translationally, N-glycosylated. Forms disulfide-linked dimers and tetramers. In terms of processing, cleaved into a smaller N-terminal chain and a larger chain that contains the fibrinogen C-terminal domain; both cleaved and uncleaved forms are detected in the extracellular space. The cleaved form is not present within the cell.

The protein resides in the secreted. It localises to the extracellular space. Its subcellular location is the extracellular matrix. In terms of biological role, mediates inactivation of the lipoprotein lipase LPL, and thereby plays a role in the regulation of triglyceride clearance from the blood serum and in lipid metabolism. May also play a role in regulating glucose homeostasis and insulin sensitivity. Inhibits proliferation, migration, and tubule formation of endothelial cells and reduces vascular leakage. Upon heterologous expression, inhibits the adhesion of endothelial cell to the extracellular matrix (ECM), and inhibits the reorganization of the actin cytoskeleton, formation of actin stress fibers and focal adhesions in endothelial cells that have adhered to ANGPTL4-containing ECM (in vitro). Depending on context, may modulate tumor-related angiogenesis. Mediates inactivation of the lipoprotein lipase LPL, and thereby plays an important role in the regulation of triglyceride clearance from the blood serum and in lipid metabolism. Has higher activity in LPL inactivation than the uncleaved protein. This Rattus norvegicus (Rat) protein is Angiopoietin-related protein 4 (Angptl4).